The following is a 186-amino-acid chain: uncharacterized protein (186 aa).

The disordered stretch occupies residues 121-146 (TSPLLKKNKPSSDQDDTSKQSFDQDE).

It belongs to the chlamydial CPn_0422/CT_273/TC_0545 family.

This is an uncharacterized protein from Chlamydia muridarum (strain MoPn / Nigg).